Consider the following 251-residue polypeptide: Adapter protein MecA (251 aa).

This sequence belongs to the MecA family. As to quaternary structure, homodimer.

Functionally, enables the recognition and targeting of unfolded and aggregated proteins to the ClpC protease or to other proteins involved in proteolysis. This is Adapter protein MecA from Streptococcus agalactiae serotype Ia (strain ATCC 27591 / A909 / CDC SS700).